A 242-amino-acid chain; its full sequence is Orotidine 5'-phosphate decarboxylase (242 aa).

Substrate is bound by residues D16, K37, 64–73, T128, R190, Q199, G219, and R220; that span reads DLKFHDIPNT. The Proton donor role is filled by K66.

Belongs to the OMP decarboxylase family. Type 1 subfamily. In terms of assembly, homodimer.

It catalyses the reaction orotidine 5'-phosphate + H(+) = UMP + CO2. It participates in pyrimidine metabolism; UMP biosynthesis via de novo pathway; UMP from orotate: step 2/2. Catalyzes the decarboxylation of orotidine 5'-monophosphate (OMP) to uridine 5'-monophosphate (UMP). The chain is Orotidine 5'-phosphate decarboxylase from Prochlorococcus marinus (strain MIT 9215).